A 185-amino-acid chain; its full sequence is Adenylyl-sulfate kinase (185 aa).

Residue 13–20 (GLSGAGKT) participates in ATP binding. Serine 87 serves as the catalytic Phosphoserine intermediate.

This sequence belongs to the APS kinase family.

The catalysed reaction is adenosine 5'-phosphosulfate + ATP = 3'-phosphoadenylyl sulfate + ADP + H(+). It participates in sulfur metabolism; hydrogen sulfide biosynthesis; sulfite from sulfate: step 2/3. Functionally, catalyzes the synthesis of activated sulfate. The sequence is that of Adenylyl-sulfate kinase from Halothermothrix orenii (strain H 168 / OCM 544 / DSM 9562).